Here is a 512-residue protein sequence, read N- to C-terminus: ATP synthase subunit alpha, chloroplastic (512 aa).

170–177 (GDRQTGKT) serves as a coordination point for ATP.

Belongs to the ATPase alpha/beta chains family. In terms of assembly, F-type ATPases have 2 components, CF(1) - the catalytic core - and CF(0) - the membrane proton channel. CF(1) has five subunits: alpha(3), beta(3), gamma(1), delta(1), epsilon(1). CF(0) has four main subunits: a, b, b' and c.

The protein localises to the plastid. The protein resides in the chloroplast thylakoid membrane. It carries out the reaction ATP + H2O + 4 H(+)(in) = ADP + phosphate + 5 H(+)(out). In terms of biological role, produces ATP from ADP in the presence of a proton gradient across the membrane. The alpha chain is a regulatory subunit. The sequence is that of ATP synthase subunit alpha, chloroplastic from Chaetosphaeridium globosum (Charophycean green alga).